The primary structure comprises 73 residues: Translation initiation factor IF-1 (73 aa).

Positions 1 to 72 (MPKKDAIEVE…TRGRVTYRFK (72 aa)) constitute an S1-like domain.

This sequence belongs to the IF-1 family. Component of the 30S ribosomal translation pre-initiation complex which assembles on the 30S ribosome in the order IF-2 and IF-3, IF-1 and N-formylmethionyl-tRNA(fMet); mRNA recruitment can occur at any time during PIC assembly.

The protein resides in the cytoplasm. Functionally, one of the essential components for the initiation of protein synthesis. Stabilizes the binding of IF-2 and IF-3 on the 30S subunit to which N-formylmethionyl-tRNA(fMet) subsequently binds. Helps modulate mRNA selection, yielding the 30S pre-initiation complex (PIC). Upon addition of the 50S ribosomal subunit IF-1, IF-2 and IF-3 are released leaving the mature 70S translation initiation complex. This Dehalococcoides mccartyi (strain ATCC BAA-2266 / KCTC 15142 / 195) (Dehalococcoides ethenogenes (strain 195)) protein is Translation initiation factor IF-1.